Consider the following 505-residue polypeptide: MAHHRGHRHILLYVSLALSLGLALAEDATDPSDDTGSFDDVEAVSEEADLDPYSMSQELNKRPNVDPYSYLPSVGKRAFDHYGFTGGLGKRKIDHFGFVGGLGKRQIDPLGFSGGIGKRYDSFAYSAGLGKRGMDSLAFSGGLGKRGMDSLAFSGGLGKRGMDSLAFSGGLGKRGMDSLAFSGGLGKRGMDSLAFSGGLGKRGMDSLAFSGGLGKRGMDSFTFAPGLGKRGMDSLAFAGGLGKRMDGFAFAPGLGKRMDSFAFAPGLGKRGMDSLAFAGGLGKRMDSFAFAPGLGKRMDSFAFAPGLGKRGLDRYGFVGGLGKRGMDHFAFTGGLGKRDSGEASGDLEEGKRGLDAYSFTGALGKRGLDRYGFVGGLGKRGMDDFAFSPGLGKKRMDSFMFGSRLGKRGMDRFSFSGHLGKRKMDQFSFGPGLGKRGFDHYGFTGGIGKRGFDHYGFTGGIGKRQLDPMLFSGRLGKRSSSEQEEEDVRQVEKRSTTEEQSSKSL.

A signal peptide spans 1–25; it reads MAHHRGHRHILLYVSLALSLGLALA. Positions 26-62 are excised as a propeptide; sequence EDATDPSDDTGSFDDVEAVSEEADLDPYSMSQELNKR. A Valine amide modification is found at Val74. Leucine amide is present on residues Leu88 and Leu102. Residue Gln106 is modified to Pyrrolidone carboxylic acid. Residue Ile116 is modified to Isoleucine amide. A leucine amide mark is found at Leu129, Leu143, Leu157, Leu171, Leu185, Leu199, Leu213, Leu227, Leu241, Leu254, Leu267, Leu281, Leu294, Leu307, Leu321, and Leu335. Glu349 carries the post-translational modification Glutamic acid 1-amide. Leucine amide is present on residues Leu363, Leu377, Leu391, Leu405, Leu419, and Leu433. 2 positions are modified to isoleucine amide: Ile447 and Ile461. Residue Gln465 is modified to Pyrrolidone carboxylic acid. A disordered region spans residues 472-505; it reads SGRLGKRSSSEQEEEDVRQVEKRSTTEEQSSKSL. Leu475 is subject to Leucine amide. The segment covering 488–505 has biased composition (basic and acidic residues); that stretch reads VRQVEKRSTTEEQSSKSL. Residues 495–505 constitute a propeptide that is removed on maturation; it reads STTEEQSSKSL.

Cholinergic motor neuron B15 innervating buccal muscles in Aplysia.

It is found in the secreted. Its function is as follows. Modulatory neuropeptide, acting presynaptically on nerve terminals to inhibit acetylcholine release. In Aplysia californica (California sea hare), this protein is Buccalin.